Reading from the N-terminus, the 80-residue chain is uncharacterized protein (80 aa).

The first 15 residues, 1-15, serve as a signal peptide directing secretion; sequence MEVIVVIVVIVVVIA. A compositionally biased stretch (low complexity) spans 23-44; it reads NSNSNSNNSSDSSNESNNSDSS. Positions 23 to 52 are disordered; sequence NSNSNSNNSSDSSNESNNSDSSKNGGSDIY. 5 N-linked (GlcNAc...) asparagine glycosylation sites follow: asparagine 29, asparagine 30, asparagine 36, asparagine 39, and asparagine 64.

Its subcellular location is the secreted. This is an uncharacterized protein from Dictyostelium discoideum (Social amoeba).